The following is a 543-amino-acid chain: Headcase protein homolog (543 aa).

Disordered stretches follow at residues 1–26 (MPNPKNSKGGRKNKRANSSGDEQENG) and 197–283 (MQDE…LSPA). 2 stretches are compositionally biased toward basic and acidic residues: residues 197-211 (MQDEKKKKSGSEKNT) and 235-250 (PSHDLPRRHSMDRQNS). Phosphoserine occurs at positions 264 and 268.

As to expression, expressed in all tissues examined. Highest levels are in the spleen, thymus, peripheral blood and heart. Lowest in the kidney and pancreas.

May play an important role in some human cancers. May be part of the regulatory mechanism in the development of epithelial tube networks such as the circulatory system and lungs. The sequence is that of Headcase protein homolog (HECA) from Homo sapiens (Human).